We begin with the raw amino-acid sequence, 375 residues long: MKDKSQIRVVVGMSGGVDSSVSAYLLKQQGYDVVGVFMKNWDDKNDSGVCTVTEDYQDVAKVASQIGIPYYSVNFEKEYWDRVFTYFLDEYKNGRTPNPDIMCNKEVKFKAFLDYAMSIDADYIAMGHYAQLRRDEDGRVHLLRGADDNKDQTYFLSQLSQEQLQKVMFPIGHLQKSEVRRIAEEAGLATAKKKDSTGICFIGERNFSKFLGEFLPAQPGEMVTLDGEVKGNHFGLMNYTIGQRKGLGIGGDGKSNEPWFVIGKDLKTNTLLVGQGYHNEHLYANSLDASKLSFVDDISDCGDEFHCTAKFRYRQKDTGVTVKFNEDRTKVEVIFDEPVRAITPGQEVVFYDGEECLGSGTIDHAYKESKLLQYV.

Residues 12–19 and methionine 38 contribute to the ATP site; that span reads GMSGGVDS. An interaction with target base in tRNA region spans residues 98 to 100; it reads NPD. Cysteine 103 acts as the Nucleophile in catalysis. A disulfide bond links cysteine 103 and cysteine 200. Residue glycine 127 coordinates ATP. Residues 150 to 152 form an interaction with tRNA region; the sequence is KDQ. Residue cysteine 200 is the Cysteine persulfide intermediate of the active site. The segment at 312–313 is interaction with tRNA; the sequence is RY.

Belongs to the MnmA/TRMU family.

The protein resides in the cytoplasm. It catalyses the reaction S-sulfanyl-L-cysteinyl-[protein] + uridine(34) in tRNA + AH2 + ATP = 2-thiouridine(34) in tRNA + L-cysteinyl-[protein] + A + AMP + diphosphate + H(+). Its function is as follows. Catalyzes the 2-thiolation of uridine at the wobble position (U34) of tRNA, leading to the formation of s(2)U34. This Ligilactobacillus salivarius (strain UCC118) (Lactobacillus salivarius) protein is tRNA-specific 2-thiouridylase MnmA.